A 364-amino-acid chain; its full sequence is Dihydroorotate dehydrogenase (quinone) (364 aa).

Residues Ala61–Lys65 and Thr85 contribute to the FMN site. Position 65 (Lys65) interacts with substrate. Asn110–Phe114 contributes to the substrate binding site. FMN contacts are provided by Asn139 and Asn170. Asn170 contributes to the substrate binding site. The active-site Nucleophile is Ser173. Asn175 is a substrate binding site. Positions 214 and 242 each coordinate FMN. A substrate-binding site is contributed by Asn243 to Thr244. FMN-binding positions include Gly266, Gly295, and Tyr316–Ser317.

It belongs to the dihydroorotate dehydrogenase family. Type 2 subfamily. In terms of assembly, monomer. Requires FMN as cofactor.

The protein localises to the cell membrane. The catalysed reaction is (S)-dihydroorotate + a quinone = orotate + a quinol. The protein operates within pyrimidine metabolism; UMP biosynthesis via de novo pathway; orotate from (S)-dihydroorotate (quinone route): step 1/1. Its function is as follows. Catalyzes the conversion of dihydroorotate to orotate with quinone as electron acceptor. This is Dihydroorotate dehydrogenase (quinone) from Rhodopseudomonas palustris (strain BisA53).